The following is a 403-amino-acid chain: Tyrosine--tRNA ligase (403 aa).

Positions 42–51 match the 'HIGH' region motif; the sequence is PTAPDLHLGH. The short motif at 226 to 230 is the 'KMSKS' region element; that stretch reads KMSKS. Lysine 229 contacts ATP. Positions 336–396 constitute an S4 RNA-binding domain; it reads MPISAVLNKA…GKKAFGRVTL (61 aa).

It belongs to the class-I aminoacyl-tRNA synthetase family. TyrS type 2 subfamily. In terms of assembly, homodimer.

Its subcellular location is the cytoplasm. It catalyses the reaction tRNA(Tyr) + L-tyrosine + ATP = L-tyrosyl-tRNA(Tyr) + AMP + diphosphate + H(+). Functionally, catalyzes the attachment of tyrosine to tRNA(Tyr) in a two-step reaction: tyrosine is first activated by ATP to form Tyr-AMP and then transferred to the acceptor end of tRNA(Tyr). The protein is Tyrosine--tRNA ligase of Pseudomonas syringae pv. syringae (strain B728a).